A 155-amino-acid polypeptide reads, in one-letter code: MDYEIRQEQKRKIAGFHMVGPWEHTVKQGFKQLMMWVDGKQIVPIEWIAVYYDNPDEVPAEKLRCDTVVSVAENFVLPDNSEGVIVTEIEGGEYATAVARVEDHDFATPWYQFFDALLQDSAYQITSEPCFETYLNNGVEDGYWDIEMYIPVRRK.

The protein belongs to the DNA gyrase inhibitor family. In terms of assembly, interacts with DNA gyrase.

It localises to the cytoplasm. Functionally, inhibits the supercoiling activity of DNA gyrase. Acts by inhibiting DNA gyrase at an early step, prior to (or at the step of) binding of DNA by the gyrase. It protects cells against toxins that target DNA gyrase, by inhibiting activity of these toxins and reducing the formation of lethal double-strand breaks in the cell. The sequence is that of DNA gyrase inhibitor from Salmonella arizonae (strain ATCC BAA-731 / CDC346-86 / RSK2980).